The sequence spans 347 residues: GTPase Obg (347 aa).

The 159-residue stretch at 1-159 folds into the Obg domain; sequence MKFVDEATIK…RVLRLELKLL (159 aa). The segment at 127–146 is disordered; the sequence is NTRYKTSTNRAPRQSKPGTP. Residues 129 to 138 show a composition bias toward polar residues; the sequence is RYKTSTNRAP. The 175-residue stretch at 160-334 folds into the OBG-type G domain; sequence ADVGLLGLPN…LMQAIMKYLE (175 aa). GTP is bound by residues 166-173, 191-195, 213-216, 284-287, and 315-317; these read GLPNAGKS, FTTLY, DIPG, NKID, and SAA. Mg(2+) contacts are provided by Ser-173 and Thr-193.

Belongs to the TRAFAC class OBG-HflX-like GTPase superfamily. OBG GTPase family. Monomer. The cofactor is Mg(2+).

It localises to the cytoplasm. Functionally, an essential GTPase which binds GTP, GDP and possibly (p)ppGpp with moderate affinity, with high nucleotide exchange rates and a fairly low GTP hydrolysis rate. Plays a role in control of the cell cycle, stress response, ribosome biogenesis and in those bacteria that undergo differentiation, in morphogenesis control. The protein is GTPase Obg of Thioalkalivibrio sulfidiphilus (strain HL-EbGR7).